Consider the following 556-residue polypeptide: Glutamine--tRNA ligase (556 aa).

Positions 35 to 45 (PEPNGYLHIGH) match the 'HIGH' region motif. ATP is bound by residues 36 to 38 (EPN) and 42 to 48 (HIGHAKS). L-glutamine contacts are provided by D68 and Y213. Residues T232 and 262 to 263 (RL) contribute to the ATP site. A 'KMSKS' region motif is present at residues 269-273 (VTSKR).

Belongs to the class-I aminoacyl-tRNA synthetase family. As to quaternary structure, monomer.

Its subcellular location is the cytoplasm. The enzyme catalyses tRNA(Gln) + L-glutamine + ATP = L-glutaminyl-tRNA(Gln) + AMP + diphosphate. In Pseudomonas aeruginosa (strain ATCC 15692 / DSM 22644 / CIP 104116 / JCM 14847 / LMG 12228 / 1C / PRS 101 / PAO1), this protein is Glutamine--tRNA ligase.